Reading from the N-terminus, the 274-residue chain is 3-methyl-2-oxobutanoate hydroxymethyltransferase (274 aa).

Positions 50 and 89 each coordinate Mg(2+). 3-methyl-2-oxobutanoate-binding positions include 50 to 51 (DS), Asp-89, and Lys-119. Glu-121 lines the Mg(2+) pocket. Residue Glu-188 is the Proton acceptor of the active site.

The protein belongs to the PanB family. In terms of assembly, homodecamer; pentamer of dimers. It depends on Mg(2+) as a cofactor.

It localises to the cytoplasm. The enzyme catalyses 3-methyl-2-oxobutanoate + (6R)-5,10-methylene-5,6,7,8-tetrahydrofolate + H2O = 2-dehydropantoate + (6S)-5,6,7,8-tetrahydrofolate. It participates in cofactor biosynthesis; (R)-pantothenate biosynthesis; (R)-pantoate from 3-methyl-2-oxobutanoate: step 1/2. Catalyzes the reversible reaction in which hydroxymethyl group from 5,10-methylenetetrahydrofolate is transferred onto alpha-ketoisovalerate to form ketopantoate. The protein is 3-methyl-2-oxobutanoate hydroxymethyltransferase of Methylorubrum extorquens (strain PA1) (Methylobacterium extorquens).